A 201-amino-acid polypeptide reads, in one-letter code: Phosphatidylglycerophosphatase and protein-tyrosine phosphatase 1 (201 aa).

Residues 1 to 27 (MAATALLEAGLARVLFYPTLLYTLFRG) constitute a mitochondrion transit peptide. The Tyrosine-protein phosphatase domain occupies 37-188 (WYHRIDPTVL…LKEFHKQITA (152 aa)). The Phosphocysteine intermediate role is filled by Cys-132.

The protein belongs to the protein-tyrosine phosphatase family. Non-receptor class dual specificity subfamily. Interacts with STYXL1; the interaction inhibits PTPMT1 catalytic activity.

The protein resides in the mitochondrion inner membrane. The enzyme catalyses a 1,2-diacyl-sn-glycero-3-phospho-(1'-sn-glycero-3'-phosphate) + H2O = a 1,2-diacyl-sn-glycero-3-phospho-(1'-sn-glycerol) + phosphate. It carries out the reaction O-phospho-L-tyrosyl-[protein] + H2O = L-tyrosyl-[protein] + phosphate. The catalysed reaction is O-phospho-L-seryl-[protein] + H2O = L-seryl-[protein] + phosphate. It catalyses the reaction O-phospho-L-threonyl-[protein] + H2O = L-threonyl-[protein] + phosphate. The enzyme catalyses 1,2-di-(9Z-octadecenoyl)-sn-glycero-3-phospho-(1'-sn-glycerol-3'-phosphate) + H2O = 1,2-di-(9Z-octadecenoyl)-sn-glycero-3-phospho-(1'-sn-glycerol) + phosphate. It carries out the reaction 1,2-dioctanoyl-sn-glycero-3-phospho-(1D-myo-inositol-5-phosphate) + H2O = 1,2-dioctanoyl-sn-glycero-3-phospho-(1D-myo-inositol) + phosphate. The catalysed reaction is a 1-acyl-2-hexanoyl-sn-glycero-3-phospho-(1D-myo-inositol-5-phosphate) + H2O = a 1-acyl-2-hexanoyl-sn-glycero-3-phospho-(1D-myo-inositol) + phosphate. It catalyses the reaction 1,2-dibutyryl-sn-glycero-3-phospho-(1D-myo-inositol-5-phosphate) + H2O = 1,2-dibutyryl-sn-glycero-3-phospho-(1D-myo-inositol) + phosphate. The protein operates within phospholipid metabolism; phosphatidylglycerol biosynthesis; phosphatidylglycerol from CDP-diacylglycerol: step 2/2. In terms of biological role, lipid phosphatase which dephosphorylates phosphatidylglycerophosphate (PGP) to phosphatidylglycerol (PG). PGP is an essential intermediate in the biosynthetic pathway of cardiolipin, a mitochondrial-specific phospholipid regulating the membrane integrity and activities of the organelle. Has also been shown to display phosphatase activity toward phosphoprotein substrates, specifically mediates dephosphorylation of mitochondrial proteins, thereby playing an essential role in ATP production. Has probably a preference for proteins phosphorylated on Ser and/or Thr residues compared to proteins phosphorylated on Tyr residues. Probably involved in regulation of insulin secretion in pancreatic beta cells. May prevent intrinsic apoptosis, probably by regulating mitochondrial membrane integrity. The chain is Phosphatidylglycerophosphatase and protein-tyrosine phosphatase 1 from Homo sapiens (Human).